Reading from the N-terminus, the 132-residue chain is Proline-rich protein sgp2 (132 aa).

An N-terminal signal peptide occupies residues 1–20 (MKYCFVFFVTLICLIANCSA). Disordered regions lie at residues 23–62 (EGDK…SNSR) and 87–132 (GASV…LGLP). Over residues 36 to 47 (KQIERASDKTSE) the composition is skewed to basic and acidic residues. Polar residues predominate over residues 51-62 (GNTNAQGDSNSR). Low complexity predominate over residues 91 to 105 (PQLPDLPTTPSLPDM).

The protein resides in the secreted. The sequence is that of Proline-rich protein sgp2 (sgp2) from Glossina morsitans morsitans (Savannah tsetse fly).